A 166-amino-acid chain; its full sequence is NAD(P)H-quinone oxidoreductase subunit I, chloroplastic (166 aa).

2 consecutive 4Fe-4S ferredoxin-type domains span residues 55-84 (GRIH…VDWK) and 95-124 (LNYS…MTEE). The [4Fe-4S] cluster site is built by cysteine 64, cysteine 67, cysteine 70, cysteine 74, cysteine 104, cysteine 107, cysteine 110, and cysteine 114.

The protein belongs to the complex I 23 kDa subunit family. NDH is composed of at least 16 different subunits, 5 of which are encoded in the nucleus. It depends on [4Fe-4S] cluster as a cofactor.

Its subcellular location is the plastid. It localises to the chloroplast thylakoid membrane. The catalysed reaction is a plastoquinone + NADH + (n+1) H(+)(in) = a plastoquinol + NAD(+) + n H(+)(out). The enzyme catalyses a plastoquinone + NADPH + (n+1) H(+)(in) = a plastoquinol + NADP(+) + n H(+)(out). Its function is as follows. NDH shuttles electrons from NAD(P)H:plastoquinone, via FMN and iron-sulfur (Fe-S) centers, to quinones in the photosynthetic chain and possibly in a chloroplast respiratory chain. The immediate electron acceptor for the enzyme in this species is believed to be plastoquinone. Couples the redox reaction to proton translocation, and thus conserves the redox energy in a proton gradient. The sequence is that of NAD(P)H-quinone oxidoreductase subunit I, chloroplastic from Raillardella argentea (Silky raillardella).